The chain runs to 685 residues: Tripartite terminase subunit 1 (685 aa).

Residues 173–201 (CWRCVGELMVLPNHGNPSTAEGTHVSCNH) form a C3H1-type zinc finger. 2 disordered regions span residues 231–254 (EEKARPGGPEEGAVPGPGRPEAEG) and 394–423 (LGRGEEEASRESPEVPRPAGAREPGPSGAL). The segment covering 395-407 (GRGEEEASRESPE) has biased composition (basic and acidic residues). Residue 619–626 (YNKTWGRS) coordinates ATP.

The protein belongs to the herpesviridae TRM1 protein family. In terms of assembly, associates with TRM2 and TRM3 to form the tripartite terminase complex. Interacts with portal protein.

The protein localises to the host nucleus. Its function is as follows. Component of the molecular motor that translocates viral genomic DNA in empty capsid during DNA packaging. Forms a tripartite terminase complex together with TRM2 and TRM3 in the host cytoplasm. Once the complex reaches the host nucleus, it interacts with the capsid portal vertex. This portal forms a ring in which genomic DNA is translocated into the capsid. TRM1 carries an endonuclease activity that plays an important role for the cleavage of concatemeric viral DNA into unit length genomes. This Epstein-Barr virus (strain B95-8) (HHV-4) protein is Tripartite terminase subunit 1.